Consider the following 356-residue polypeptide: Phospho-N-acetylmuramoyl-pentapeptide-transferase (356 aa).

The next 10 membrane-spanning stretches (helical) occupy residues glutamine 3 to isoleucine 23, threonine 51 to isoleucine 71, glycine 80 to isoleucine 100, alanine 114 to proline 134, phenylalanine 152 to methionine 172, leucine 185 to phenylalanine 205, proline 227 to tryptophan 247, isoleucine 254 to leucine 274, phenylalanine 279 to valine 299, and phenylalanine 333 to alanine 353.

The protein belongs to the glycosyltransferase 4 family. MraY subfamily. It depends on Mg(2+) as a cofactor.

It localises to the cell membrane. The enzyme catalyses UDP-N-acetyl-alpha-D-muramoyl-L-alanyl-gamma-D-glutamyl-meso-2,6-diaminopimeloyl-D-alanyl-D-alanine + di-trans,octa-cis-undecaprenyl phosphate = di-trans,octa-cis-undecaprenyl diphospho-N-acetyl-alpha-D-muramoyl-L-alanyl-D-glutamyl-meso-2,6-diaminopimeloyl-D-alanyl-D-alanine + UMP. The protein operates within cell wall biogenesis; peptidoglycan biosynthesis. In terms of biological role, catalyzes the initial step of the lipid cycle reactions in the biosynthesis of the cell wall peptidoglycan: transfers peptidoglycan precursor phospho-MurNAc-pentapeptide from UDP-MurNAc-pentapeptide onto the lipid carrier undecaprenyl phosphate, yielding undecaprenyl-pyrophosphoryl-MurNAc-pentapeptide, known as lipid I. The chain is Phospho-N-acetylmuramoyl-pentapeptide-transferase from Streptomyces griseus subsp. griseus (strain JCM 4626 / CBS 651.72 / NBRC 13350 / KCC S-0626 / ISP 5235).